A 359-amino-acid polypeptide reads, in one-letter code: Protein-glutamate methylesterase/protein-glutamine glutaminase 1 (359 aa).

One can recognise a Response regulatory domain in the interval 4–121; sequence SVLIVDDSAV…RAFLLEAAKE (118 aa). A 4-aspartylphosphate modification is found at Asp55. The CheB-type methylesterase domain occupies 169 to 354; sequence YRTTEKIIAI…MSLERIAHML (186 aa). Active-site residues include Ser181, His207, and Asp303.

Belongs to the CheB family. Post-translationally, phosphorylated by CheA. Phosphorylation of the N-terminal regulatory domain activates the methylesterase activity.

The protein localises to the cytoplasm. The catalysed reaction is [protein]-L-glutamate 5-O-methyl ester + H2O = L-glutamyl-[protein] + methanol + H(+). It catalyses the reaction L-glutaminyl-[protein] + H2O = L-glutamyl-[protein] + NH4(+). In terms of biological role, involved in chemotaxis. Part of a chemotaxis signal transduction system that modulates chemotaxis in response to various stimuli. Catalyzes the demethylation of specific methylglutamate residues introduced into the chemoreceptors (methyl-accepting chemotaxis proteins or MCP) by CheR. Also mediates the irreversible deamidation of specific glutamine residues to glutamic acid. This is Protein-glutamate methylesterase/protein-glutamine glutaminase 1 from Chromobacterium violaceum (strain ATCC 12472 / DSM 30191 / JCM 1249 / CCUG 213 / NBRC 12614 / NCIMB 9131 / NCTC 9757 / MK).